Here is a 463-residue protein sequence, read N- to C-terminus: MAIRQHVGALFTDLYEVTMAQAYWAERMSGTAVFEIFFRKLPPGRSYIMAAGLADVVEFLEAFRFDEQDLRYLRGLGQFSDEFLRWLAGVRFTGDVWAAPEGTVIFPNEPAVQLIAPIIEAQLVETFVLNQIHLQSVLASKAARVVAAARGRPVVDFGARRAHGTDAACKVARTSYLAGAAGTSNLLAARQYGIPTFGTMAHSFVQAFDSEVAAFEAFARLYPATMLLVDTYDTLRGVDHVIELAKRLGNRFDVRAVRLDSGDLDELSKATRARLDTAGLEQVEIFASSGLDENRIAALLAARCPIDGFGVGTQLVVAQDAPALDMAYKLVAYDGSGRTKFSSGKVIYPGRKQVFRKLEHGVFCGDTLGEHGENLPGDPLLVPIMTNGRRIRQHAPTLDGARDWARQQIDALPPELRSLEDTGYSYPVAVSDRIVGELARLRHADTAEAHPGSNVVGAKAKRP.

At His202 the chain carries Phosphohistidine.

It belongs to the NAPRTase family. Transiently phosphorylated on a His residue during the reaction cycle. Phosphorylation strongly increases the affinity for substrates and increases the rate of nicotinate D-ribonucleotide production. Dephosphorylation regenerates the low-affinity form of the enzyme, leading to product release.

It carries out the reaction nicotinate + 5-phospho-alpha-D-ribose 1-diphosphate + ATP + H2O = nicotinate beta-D-ribonucleotide + ADP + phosphate + diphosphate. The protein operates within cofactor biosynthesis; NAD(+) biosynthesis; nicotinate D-ribonucleotide from nicotinate: step 1/1. Its function is as follows. Involved in the Preiss-Handler pathway, which is a recycling route that permits the salvage of free nicotinamide (NM) and nicotinic acid (Na) involved in the NAD biosynthesis. Catalyzes the synthesis of beta-nicotinate D-ribonucleotide from nicotinate and 5-phospho-D-ribose 1-phosphate at the expense of ATP. It is not able to use nicotinamide. PncB2 appears to be responsible for the increased salvage synthesis of NAD during infection of host tissues. The polypeptide is Nicotinate phosphoribosyltransferase pncB2 (pncB2) (Mycobacterium tuberculosis (strain CDC 1551 / Oshkosh)).